Reading from the N-terminus, the 378-residue chain is MSKRDYYEVLSVSRDASEREIKKAYKRLAMKFHPDRNPGDKQAEANFKEVKEAYEILTDADKKAAYDQFGHAGVDPNRGGGGFGGNADFGDVFGDVFGDIFGGGRRGGGQRQAARGSDLRYNLELSLEEAVKGLTKELRIPTLAACDSCDGSGAKKGTSPTTCGTCHGQGQVQMRQGFFAVQQACPTCHGRGKIIKDPCNKCHGEGRVEKSKTLSVKIPAGVDNGDRIRLSGEGEAGEFGAPPGDLYVQVSVREHTIFVRDGNNLYCEVPISFSKAALGGEIEVPTLDGKVNLKIPAETQTGRMFRMRGKGVKSVRSHAVGDLLCKVVMETPVKLNERQKELLREFDETLTGSSSKKHSPKAEGFFDGVKKFFQDLNS.

Residues 5–70 (DYYEVLSVSR…DKKAAYDQFG (66 aa)) form the J domain. A CR-type zinc finger spans residues 133–211 (GLTKELRIPT…CHGEGRVEKS (79 aa)). Residues cysteine 146, cysteine 149, cysteine 163, cysteine 166, cysteine 185, cysteine 188, cysteine 199, and cysteine 202 each coordinate Zn(2+). CXXCXGXG motif repeat units lie at residues 146 to 153 (CDSCDGSG), 163 to 170 (CGTCHGQG), 185 to 192 (CPTCHGRG), and 199 to 206 (CNKCHGEG).

Belongs to the DnaJ family. In terms of assembly, homodimer. Zn(2+) is required as a cofactor.

It localises to the cytoplasm. Its function is as follows. Participates actively in the response to hyperosmotic and heat shock by preventing the aggregation of stress-denatured proteins and by disaggregating proteins, also in an autonomous, DnaK-independent fashion. Unfolded proteins bind initially to DnaJ; upon interaction with the DnaJ-bound protein, DnaK hydrolyzes its bound ATP, resulting in the formation of a stable complex. GrpE releases ADP from DnaK; ATP binding to DnaK triggers the release of the substrate protein, thus completing the reaction cycle. Several rounds of ATP-dependent interactions between DnaJ, DnaK and GrpE are required for fully efficient folding. Also involved, together with DnaK and GrpE, in the DNA replication of plasmids through activation of initiation proteins. The chain is Chaperone protein DnaJ from Shewanella sediminis (strain HAW-EB3).